We begin with the raw amino-acid sequence, 1103 residues long: MSENVYPKANEGGETAHVAPNPSFPDMEETVLDYWDKDDTFQKSVERNPSGDHSQNEFVFFDGPPFANGLPHYGHLLTGYAKDVIPRYQTMKGRKVNRVFGWDTHGLPAELEAQKELGIDSVDQIEKMGIDKFNDACRASVLKYTNEWQNYVHRQARWVDFEHGYKTLNIPYMESVMWAFKQLYDKGLAYQGYRVLPYCPKDRTPLSAHELRMDADVYQDRQDTTVSVAVKMRDEDDAYAVFWTTTPWTVPTNFAIVVGGDIDYVEVRPTEGKFAGKKFYLGKDLLPHYEKELGENYEVVRELKGSELEGRRYYPVFPYFAGDEAESEGHVPGPNGYTIFTADYVDTVEGTGLVHQAPYGEDDMNTLNAKGIKSTDVLDDGCRFTAQCPDYEGDFVFDANLPILRNLRAGDGPLAEIPEERRAILFQEKSYVHSYPHCWRCATPLIYKPVSSWFVSVTKIKPRLLELNQQINWIPGNVKDGQFGKWLANARDWSISRNRFWGSPIPVWVSDDPKYPRVDVYGSLEELKADFGDYPRDKDGNINMHRPWIDNLVRVNPDDPTGKSHMHRISDVLDCWFESGSMSFAQFHYPFENKEKFEQHFPADYIVEYIGQTRGWFYLLHVMATALFDRPAFKNVICHGIVLGSDGQKMSKHLRNYPDVNGVFDKYGSDAMRWFLMSSPILRGGNLIVTADGIRDTVRQVMLPVWSSYYFFTLYANAANGGAGFDARQLRADEVAGLPEMDRYLLARTRRLVLAAEKSLNEFAISDACDAVSDFIDVLTNWYIRNTRDRFWNEDASAFNTLYTVLEAFMRVLAPLAPMEAESVWRGLTGGESVHLAEWPFVVDEKTGADTELGRVLVDDPALVDAMEKVREVVSGTLSLRKAAKIRVRQPLSKLTVVAGNVEAVKAYDDLLKAELNIKNIEFSTLQDAAAHGLKIVHELRVNARAAGPRLGKQVQFAIKASKSGDWHVDAASGAPVVSTPSGDLALVEGEYELINRVEEENATEAAASVSAALPTGGFVILDTALDADLLAEGYARDVIRSVQDARKAADLDIADRISLVLTVPAVDVAKVEQFRDLIAHETLATSFEVKEGAELGVEVVKA.

The disordered stretch occupies residues 1–25; it reads MSENVYPKANEGGETAHVAPNPSFP. The 'HIGH' region signature appears at 65–75; it reads PFANGLPHYGH. Residues 649-653 carry the 'KMSKS' region motif; sequence KMSKH. ATP is bound at residue lysine 652.

It belongs to the class-I aminoacyl-tRNA synthetase family. IleS type 2 subfamily. In terms of assembly, monomer. It depends on Zn(2+) as a cofactor.

Its subcellular location is the cytoplasm. It carries out the reaction tRNA(Ile) + L-isoleucine + ATP = L-isoleucyl-tRNA(Ile) + AMP + diphosphate. Catalyzes the attachment of isoleucine to tRNA(Ile). As IleRS can inadvertently accommodate and process structurally similar amino acids such as valine, to avoid such errors it has two additional distinct tRNA(Ile)-dependent editing activities. One activity is designated as 'pretransfer' editing and involves the hydrolysis of activated Val-AMP. The other activity is designated 'posttransfer' editing and involves deacylation of mischarged Val-tRNA(Ile). This Bifidobacterium longum (strain NCC 2705) protein is Isoleucine--tRNA ligase.